A 500-amino-acid chain; its full sequence is Glutelin type-B 5 (500 aa).

The signal sequence occupies residues M1–A24. 2 cysteine pairs are disulfide-bonded: C45/C78 and C121/C310. 2 Cupin type-1 domains span residues L50–K245 and L316–R465.

The protein belongs to the 11S seed storage protein (globulins) family. In terms of assembly, hexamer; each subunit is composed of an acidic and a basic chain derived from a single precursor and linked by a disulfide bond.

Seed storage protein. This chain is Glutelin type-B 5 (GLUB5), found in Oryza sativa subsp. japonica (Rice).